The following is a 329-amino-acid chain: UDP-3-O-acylglucosamine N-acyltransferase (329 aa).

His224 serves as the catalytic Proton acceptor.

The protein belongs to the transferase hexapeptide repeat family. LpxD subfamily. Homotrimer.

It carries out the reaction a UDP-3-O-[(3R)-3-hydroxyacyl]-alpha-D-glucosamine + a (3R)-hydroxyacyl-[ACP] = a UDP-2-N,3-O-bis[(3R)-3-hydroxyacyl]-alpha-D-glucosamine + holo-[ACP] + H(+). It functions in the pathway bacterial outer membrane biogenesis; LPS lipid A biosynthesis. In terms of biological role, catalyzes the N-acylation of UDP-3-O-acylglucosamine using 3-hydroxyacyl-ACP as the acyl donor. Is involved in the biosynthesis of lipid A, a phosphorylated glycolipid that anchors the lipopolysaccharide to the outer membrane of the cell. This is UDP-3-O-acylglucosamine N-acyltransferase from Albidiferax ferrireducens (strain ATCC BAA-621 / DSM 15236 / T118) (Rhodoferax ferrireducens).